A 275-amino-acid chain; its full sequence is Homeobox protein Hox-C12a (275 aa).

Disordered regions lie at residues 101-129 and 148-213; these read SRENCSGGGSLKREDRARDTSALTSDHGM and QLTQ…KRKP. A compositionally biased stretch (low complexity) spans 155–177; sequence SCQSMESDSSSSLLNEASKPSSS. Polar residues predominate over residues 178-194; it reads DTQTLVSPGSHTGTITA. The segment at residues 207–266 is a DNA-binding region (homeobox); that stretch reads TRKKRKPYSKLQLAELEGEFMMNEFITRQRRRELSDRLNLSDQQVKIWFQNRRMKKKRLM.

This sequence belongs to the Abd-B homeobox family.

Its subcellular location is the nucleus. Functionally, sequence-specific transcription factor which is part of a developmental regulatory system that provides cells with specific positional identities on the anterior-posterior axis. The protein is Homeobox protein Hox-C12a (hoxc12a) of Takifugu rubripes (Japanese pufferfish).